We begin with the raw amino-acid sequence, 72 residues long: Translation initiation factor IF-1 (72 aa).

Residues 1–72 (MAKDDVIQMQ…SRARIVFRAK (72 aa)) enclose the S1-like domain.

The protein belongs to the IF-1 family. Component of the 30S ribosomal translation pre-initiation complex which assembles on the 30S ribosome in the order IF-2 and IF-3, IF-1 and N-formylmethionyl-tRNA(fMet); mRNA recruitment can occur at any time during PIC assembly.

The protein resides in the cytoplasm. Its function is as follows. One of the essential components for the initiation of protein synthesis. Stabilizes the binding of IF-2 and IF-3 on the 30S subunit to which N-formylmethionyl-tRNA(fMet) subsequently binds. Helps modulate mRNA selection, yielding the 30S pre-initiation complex (PIC). Upon addition of the 50S ribosomal subunit IF-1, IF-2 and IF-3 are released leaving the mature 70S translation initiation complex. The chain is Translation initiation factor IF-1 from Burkholderia thailandensis (strain ATCC 700388 / DSM 13276 / CCUG 48851 / CIP 106301 / E264).